The sequence spans 102 residues: Small ribosomal subunit protein uS10 (102 aa).

This sequence belongs to the universal ribosomal protein uS10 family. Part of the 30S ribosomal subunit.

In terms of biological role, involved in the binding of tRNA to the ribosomes. The protein is Small ribosomal subunit protein uS10 of Roseiflexus sp. (strain RS-1).